The following is a 986-amino-acid chain: Regulator of telomere elongation helicase 1 homolog (986 aa).

Positions 7 to 326 (AGIPVHFPFE…KEMLLELEKA (320 aa)) constitute a Helicase ATP-binding domain. Residue 42 to 49 (SPTGTGKT) participates in ATP binding. Residues cysteine 148, cysteine 166, cysteine 175, and cysteine 211 each coordinate [4Fe-4S] cluster. The DEAH box signature appears at 254 to 257 (DEGH). Phosphothreonine is present on threonine 875.

This sequence belongs to the helicase family. RAD3/XPD subfamily.

The protein resides in the nucleus. It catalyses the reaction ATP + H2O = ADP + phosphate + H(+). In terms of biological role, a probable ATP-dependent DNA helicase implicated in DNA repair and the maintenance of genomic stability. Acts as an anti-recombinase to counteract toxic recombination and limit crossover during meiosis. Regulates meiotic recombination and crossover homeostasis by physically dissociating strand invasion events and thereby promotes noncrossover repair by meiotic synthesis dependent strand annealing (SDSA) as well as disassembly of D loop recombination intermediates. The polypeptide is Regulator of telomere elongation helicase 1 homolog (Drosophila grimshawi (Hawaiian fruit fly)).